Reading from the N-terminus, the 218-residue chain is Small ribosomal subunit protein uS3 (218 aa).

In terms of domain architecture, KH type-2 spans 38-106 (IRKYIESKLA…RVHINIVEIK (69 aa)).

Belongs to the universal ribosomal protein uS3 family. Part of the 30S ribosomal subunit. Forms a tight complex with proteins S10 and S14.

Its function is as follows. Binds the lower part of the 30S subunit head. Binds mRNA in the 70S ribosome, positioning it for translation. This is Small ribosomal subunit protein uS3 from Ligilactobacillus salivarius (strain UCC118) (Lactobacillus salivarius).